Reading from the N-terminus, the 362-residue chain is MPLPQLDPAQYAAQLAEKAARLEELLAPFDAPAAEVFDSPREHYRLRAEFRLWREGGQRHYAMFEQGDKHKAILIDDFPIASRRINELMPQLKAAWQASEVLSFKLFQVEFLTTLSGDALITLAYHRPLDEAWQAEAEQLAADLGVSLVGRSKGKRIVIGRDYVEEQLVVAGRSFRYRQPEGAFTQPNGEVCQKMLNWAHEALGERDDDLLELYCGNGNFTLPLATRVRRVLATEISKTSVNAALANIEDNGLDNIELVRLSAEELTQALNEVRPFRRLAGIDLKSYSFGSVFVDPPRAGMDPDTCELTRRFERILYISCNPETLAQNIAQLADTHRIERCALFDQFPYTHHMEAGVLLVRR.

Residues Gln-186, Tyr-214, Asn-219, Glu-235, and Asp-295 each contribute to the S-adenosyl-L-methionine site. The active-site Nucleophile is Cys-320. The active-site Proton acceptor is Glu-354.

This sequence belongs to the class I-like SAM-binding methyltransferase superfamily. RNA M5U methyltransferase family. TrmA subfamily.

It catalyses the reaction uridine(54) in tRNA + S-adenosyl-L-methionine = 5-methyluridine(54) in tRNA + S-adenosyl-L-homocysteine + H(+). The enzyme catalyses uridine(341) in tmRNA + S-adenosyl-L-methionine = 5-methyluridine(341) in tmRNA + S-adenosyl-L-homocysteine + H(+). Dual-specificity methyltransferase that catalyzes the formation of 5-methyluridine at position 54 (m5U54) in all tRNAs, and that of position 341 (m5U341) in tmRNA (transfer-mRNA). This chain is tRNA/tmRNA (uracil-C(5))-methyltransferase, found in Stutzerimonas stutzeri (strain A1501) (Pseudomonas stutzeri).